We begin with the raw amino-acid sequence, 322 residues long: MSKTYIGIDIAKNTFDACFIAHNTWQNCTFTNNQQGFMELTLWIQAHHYNTSTLHLIIEATGTYWEKLAHWAISHHHKVSIVNPLYIHAYAKSLGIRTKTDKQDAILLARYGAKENPPLWQPKSDNEIKLTALLKQREHHKRQLIKERTRQEALSIYVKSYTDDNIRHWSDSITQLDHQIWQLINCTPELNHRASLLATIPGIGKKTLPHLLVAIGDGSSFQSAKHLASYAGLAPRHHQSGISIHKQSSIGFSGQKELRSALFMPAVIVSFGRYPAFQKFVKRMEQKGKTKKQIIIAIMRKLLTISYAVIRQNRPFDKRIHE.

May be the site-specific invertase required for pilin gene inversion. Moraxella can express either a Q or I pilin; the inversion of 2 kb of DNA determines which pilin is expressed. The protein is Pilin gene-inverting protein (piv) of Moraxella bovis.